Here is a 255-residue protein sequence, read N- to C-terminus: Small ribosomal subunit protein uS2 (255 aa).

It belongs to the universal ribosomal protein uS2 family.

The chain is Small ribosomal subunit protein uS2 from Streptococcus thermophilus (strain CNRZ 1066).